A 173-amino-acid chain; its full sequence is Protein tyrosine phosphatase type IVA 3 (173 aa).

In terms of domain architecture, Tyrosine-protein phosphatase spans Ala8–Lys161. Cys49 and Cys104 form a disulfide bridge. Asp72 serves as the catalytic Proton donor. The Phosphocysteine intermediate role is filled by Cys104. Position 110 (Arg110) interacts with substrate. Cys170 carries the post-translational modification Cysteine methyl ester. Cys170 carries the S-farnesyl cysteine lipid modification. Residues Cys171–Met173 constitute a propeptide, removed in mature form.

Belongs to the protein-tyrosine phosphatase family. In terms of assembly, interacts with tubulin. In terms of processing, farnesylated. Farnesylation is required for membrane targeting. In terms of tissue distribution, mainly expressed in cardiomyocytes and skeletal muscle; also found in pancreas. Consistently overexpressed in colon cancer metastasis.

It is found in the cell membrane. Its subcellular location is the early endosome. The catalysed reaction is O-phospho-L-tyrosyl-[protein] + H2O = L-tyrosyl-[protein] + phosphate. Its activity is regulated as follows. Inhibited by sodium orthovanadate and peroxovanadium compounds, and by pentamidine. Its function is as follows. Protein tyrosine phosphatase which stimulates progression from G1 into S phase during mitosis. Enhances cell proliferation, cell motility and invasive activity, and promotes cancer metastasis. May be involved in the progression of cardiac hypertrophy by inhibiting intracellular calcium mobilization in response to angiotensin II. The chain is Protein tyrosine phosphatase type IVA 3 (PTP4A3) from Homo sapiens (Human).